Consider the following 390-residue polypeptide: MKIVLAYSGGLDTTVAIRWLKETFNADVITVTVDVGQKDNFEDIEKRAYIAGATKHYTIDAKKEFADNFISYAIKMNALYEDVYPLSTALARPLIAQKVVEIAKKEKVDYIAHGSTSKGNDQVRFDLAVKALYPEAKIIAPARIWNMTREKEIEFAKARGIPIKTESSKYSIDENLWGRSIEGDDISDPSKEVPEDAFEWTKKKNNGKITLSIEFEKGIPVAINNEKMDLVKIIQVLNEVVGSYGFGRVEHLENRVVGFKSREVYEVPAALVLINSHKDLEKTVYSPLEFRFKKYIDSQWADLVYQGLWFEPLRETIQLAGDNLNKWVTGEVKIEIEGNGMRTLGRASKYSPFSEKVASYNKGWYPTDEMARGFIEIYGMHSLLTRQVRE.

6–14 is a binding site for ATP; that stretch reads AYSGGLDTT. Tyrosine 84 lines the L-citrulline pocket. Glycine 114 serves as a coordination point for ATP. L-aspartate-binding residues include threonine 116, asparagine 120, and aspartate 121. Asparagine 120 contributes to the L-citrulline binding site. 5 residues coordinate L-citrulline: arginine 124, serine 171, serine 180, glutamate 253, and tyrosine 265.

The protein belongs to the argininosuccinate synthase family. Type 1 subfamily. Homotetramer.

The protein localises to the cytoplasm. It catalyses the reaction L-citrulline + L-aspartate + ATP = 2-(N(omega)-L-arginino)succinate + AMP + diphosphate + H(+). Its pathway is amino-acid biosynthesis; L-arginine biosynthesis; L-arginine from L-ornithine and carbamoyl phosphate: step 2/3. In Sulfurisphaera tokodaii (strain DSM 16993 / JCM 10545 / NBRC 100140 / 7) (Sulfolobus tokodaii), this protein is Argininosuccinate synthase.